A 132-amino-acid chain; its full sequence is MTLNLCVLTPNRIIWDSEVKEIILSTNSGQIGVLPNHAPIATAVDIGILRIRLNGQWLMMAVMGGFARIGNNEITILVNDAEKGSDIDPQEAQRTLEIAEANLSKAEGKRQVIEANLALRRARTRVEAINVI.

The protein belongs to the ATPase epsilon chain family. In terms of assembly, F-type ATPases have 2 components, CF(1) - the catalytic core - and CF(0) - the membrane proton channel. CF(1) has five subunits: alpha(3), beta(3), gamma(1), delta(1), epsilon(1). CF(0) has three main subunits: a, b and c.

The protein localises to the plastid. It is found in the chloroplast thylakoid membrane. Produces ATP from ADP in the presence of a proton gradient across the membrane. This is ATP synthase epsilon chain, chloroplastic from Calycanthus floridus var. glaucus (Eastern sweetshrub).